We begin with the raw amino-acid sequence, 639 residues long: Serine/threonine-protein kinase PAK mbt (639 aa).

In terms of domain architecture, CRIB spans 11–24; that stretch reads ISMPSNFEHRVHTG. The linker stretch occupies residues 25–367; that stretch reads FDKRENKYVG…VVSAGDPREN (343 aa). 2 disordered regions span residues 79–195 and 222–345; these read HHNN…SLLY and RSNL…QDQR. Low complexity-rich tracts occupy residues 91–129, 138–159, 227–241, and 274–295; these read NSSS…ETGG, VARS…ANVP, PPSG…QTSP, and QQQQ…NPLH. Positions 296 to 308 are enriched in basic residues; it reads PHAHPHPHHHQHL. The span at 309-331 shows a compositional bias: low complexity; it reads AKSASRASSSSGGASSAAQQASG. The region spanning 368-619 is the Protein kinase domain; that stretch reads LDHFNKIGEG…AAELLAHPFL (252 aa). Residues 374 to 382 and K397 each bind ATP; that span reads IGEGSTGTV. The active-site Proton acceptor is the D487. S521 is subject to Phosphoserine. Residue T525 is modified to Phosphothreonine.

It belongs to the protein kinase superfamily. STE Ser/Thr protein kinase family. STE20 subfamily. As to quaternary structure, interacts tightly with GTP-bound but not GDP-bound Cdc42 and weakly with Rac1. Mg(2+) serves as cofactor. In terms of processing, autophosphorylated when activated by Cdc42. In terms of tissue distribution, expressed in adult brain and eye. High levels detected in developing photoreceptor cells and future bristle cells, and lower levels in cone and pigment cells, as detected in third instar eye imaginal disks (at protein level).

Its subcellular location is the cell junction. It is found in the adherens junction. The protein resides in the cell membrane. The catalysed reaction is L-seryl-[protein] + ATP = O-phospho-L-seryl-[protein] + ADP + H(+). The enzyme catalyses L-threonyl-[protein] + ATP = O-phospho-L-threonyl-[protein] + ADP + H(+). Functionally, involved in neurogenesis of the adult central nervous system, and together with Cdc42, regulates photoreceptor cell morphogenesis. Phosphorylates exogenous substrates when activated by Cdc42. The chain is Serine/threonine-protein kinase PAK mbt from Drosophila melanogaster (Fruit fly).